The chain runs to 102 residues: MANKKIRIRLKAYEHRTLDTAAEKIVETATRTGATVAGPVPLPTERSLYTIIRATHKYKDSREQFEMRTHKRLIDIVNPTQKTVDALMKLDLPSGVNVEIKL.

The protein belongs to the universal ribosomal protein uS10 family. As to quaternary structure, part of the 30S ribosomal subunit.

Its function is as follows. Involved in the binding of tRNA to the ribosomes. The sequence is that of Small ribosomal subunit protein uS10 from Streptococcus uberis (strain ATCC BAA-854 / 0140J).